Reading from the N-terminus, the 332-residue chain is Ketol-acid reductoisomerase (NADP(+)) (332 aa).

One can recognise a KARI N-terminal Rossmann domain in the interval 2 to 182 (AKVYYDEDAS…GCTRAGLIET (181 aa)). NADP(+) contacts are provided by residues 25-28 (YGSQ), S51, S53, and 83-86 (DTIQ). H108 is a catalytic residue. G134 lines the NADP(+) pocket. The KARI C-terminal knotted domain occupies 183-327 (TFKEETETDL…KELRKMMPWL (145 aa)). Mg(2+) contacts are provided by D191, E195, E227, and E231. A substrate-binding site is contributed by S252.

Belongs to the ketol-acid reductoisomerase family. Mg(2+) serves as cofactor.

The enzyme catalyses (2R)-2,3-dihydroxy-3-methylbutanoate + NADP(+) = (2S)-2-acetolactate + NADPH + H(+). It catalyses the reaction (2R,3R)-2,3-dihydroxy-3-methylpentanoate + NADP(+) = (S)-2-ethyl-2-hydroxy-3-oxobutanoate + NADPH + H(+). It functions in the pathway amino-acid biosynthesis; L-isoleucine biosynthesis; L-isoleucine from 2-oxobutanoate: step 2/4. The protein operates within amino-acid biosynthesis; L-valine biosynthesis; L-valine from pyruvate: step 2/4. Involved in the biosynthesis of branched-chain amino acids (BCAA). Catalyzes an alkyl-migration followed by a ketol-acid reduction of (S)-2-acetolactate (S2AL) to yield (R)-2,3-dihydroxy-isovalerate. In the isomerase reaction, S2AL is rearranged via a Mg-dependent methyl migration to produce 3-hydroxy-3-methyl-2-ketobutyrate (HMKB). In the reductase reaction, this 2-ketoacid undergoes a metal-dependent reduction by NADPH to yield (R)-2,3-dihydroxy-isovalerate. The chain is Ketol-acid reductoisomerase (NADP(+)) from Persephonella marina (strain DSM 14350 / EX-H1).